An 89-amino-acid chain; its full sequence is OMEGA-ectatommitoxin(02)-Rm1a (89 aa).

Positions 1–30 (MKDSYISIVIAYLMVTFILVSSMPIEGEKG) are cleaved as a signal peptide. 3 disulfide bridges follow: Cys-39-Cys-52, Cys-47-Cys-68, and Cys-70-Cys-79. In terms of domain architecture, EGF-like spans 43–80 (YANYCFNGKCVHVVAQDEPGKPCYSCICDKFYIGKRCG).

The protein belongs to the EGF domain peptide family. Expressed by the venom gland.

The protein resides in the secreted. In terms of biological role, ant peptide with probable defensive activity which acts as a potent agonist of the mammalian epidermal growth factor receptor (EGFR). Mimics, both structurally and functionally, vertebrate epidermal growth factor (EGF) peptide hormones. In vivo, intraplantar injection in mice causes long-lasting (several days) hypersensitivity of the injected paw to both mechanical and thermal stimuli. Its long-lasting effect is unusual for venom toxins whose effects are usually immediate. One possible explanation is that it would reduce the duration of a nest attack, discourage future attacks, or enhance the actions of subsequent exposure to other pain-inducing venom peptides. This chain is OMEGA-ectatommitoxin(02)-Rm1a, found in Rhytidoponera metallica (Australian green-headed ant).